A 461-amino-acid chain; its full sequence is Asparagine--tRNA ligase (461 aa).

Belongs to the class-II aminoacyl-tRNA synthetase family. As to quaternary structure, homodimer.

It localises to the cytoplasm. The catalysed reaction is tRNA(Asn) + L-asparagine + ATP = L-asparaginyl-tRNA(Asn) + AMP + diphosphate + H(+). This is Asparagine--tRNA ligase from Oleidesulfovibrio alaskensis (strain ATCC BAA-1058 / DSM 17464 / G20) (Desulfovibrio alaskensis).